The chain runs to 282 residues: uncharacterized protein (282 aa).

2 disordered regions span residues 1–45 (MPLE…EEDE) and 201–259 (DRRR…KPWG). Residues 10–19 (SEMKEFKEST) are compositionally biased toward basic and acidic residues. A compositionally biased stretch (polar residues) spans 26-38 (SVSSEETLTQSMV). Over residues 201 to 237 (DRRRKEDSKARSRLTRREEHSEHHRSGKSRRERERRS) the composition is skewed to basic and acidic residues.

This is an uncharacterized protein from Ostreid herpesvirus 1 (isolate France) (OsHV-1).